The sequence spans 489 residues: MNELRKLSIAQMHNGLKQRSFSAVELIEVHINAVENEKLNAFITKTPEIAIKAAKTADERFSQQKDSTISPLMGIPVGVKDLFCTKGVKTTACSKMLENFIPTYESTVSDLLLKSGAAMLGKLNMDEFAMGSANINSYFGPVENVWVRKSDGEKVVPGGSSGGSAASVAGFLCAGALGSDTGGSVRQPAAYCGVVGAKPTYGRCSRFGMIAFASSLDQAGVITRSVSDSALMLETICGYDNKDSTSSERPVPRFSNFINGDIKGRRIGIPKEYRMDGISEEIIYHWEKVSSDLKENGAEVVDITLPHTKYAIPVYYLICSAEASSNLARYDGVRYGLRVNADILEEMYSLTRAEGFGKEVKRRILIGAYALSSGHYNEYYEKAQCIRALIRNDFIKAFEKIDYILVPSAPTEAFGLNEKPDPLIMCINDVFTVPASLAGLPAISVPVGLSNEGLPLALQVIGNYYDEAGMLNVASVIEQNCSRIIKLNS.

Residues K80 and S160 each act as charge relay system in the active site. Residue S184 is the Acyl-ester intermediate of the active site.

This sequence belongs to the amidase family. GatA subfamily. In terms of assembly, heterotrimer of A, B and C subunits.

The catalysed reaction is L-glutamyl-tRNA(Gln) + L-glutamine + ATP + H2O = L-glutaminyl-tRNA(Gln) + L-glutamate + ADP + phosphate + H(+). In terms of biological role, allows the formation of correctly charged Gln-tRNA(Gln) through the transamidation of misacylated Glu-tRNA(Gln) in organisms which lack glutaminyl-tRNA synthetase. The reaction takes place in the presence of glutamine and ATP through an activated gamma-phospho-Glu-tRNA(Gln). The chain is Glutamyl-tRNA(Gln) amidotransferase subunit A from Wolbachia sp. subsp. Brugia malayi (strain TRS).